The chain runs to 115 residues: uncharacterized protein (115 aa).

The Cytoplasmic portion of the chain corresponds to 1 to 11; sequence MKLTKEKKNDC. Residues 12–32 form a helical membrane-spanning segment; it reads LVGVSYIPPLNFFTLTFLFLL. The Extracellular segment spans residues 33-52; sequence RIEKVHLSLSLSLSLSLRFY. The chain crosses the membrane as a helical span at residues 53–73; sequence YFHNVCYPSLFLFFCFVIPFF. Topologically, residues 74–78 are cytoplasmic; that stretch reads YSVRF. A helical transmembrane segment spans residues 79–98; the sequence is ILLYLHILRSFYELNILLLY. Residues 99-115 are Extracellular-facing; sequence GAENSRRQSPPGYYVIR.

It is found in the membrane. This is an uncharacterized protein from Saccharomyces cerevisiae (strain ATCC 204508 / S288c) (Baker's yeast).